A 670-amino-acid chain; its full sequence is Glycine--tRNA ligase beta subunit (670 aa).

It belongs to the class-II aminoacyl-tRNA synthetase family. Tetramer of two alpha and two beta subunits.

The protein localises to the cytoplasm. The enzyme catalyses tRNA(Gly) + glycine + ATP = glycyl-tRNA(Gly) + AMP + diphosphate. This is Glycine--tRNA ligase beta subunit from Thermotoga neapolitana (strain ATCC 49049 / DSM 4359 / NBRC 107923 / NS-E).